A 461-amino-acid polypeptide reads, in one-letter code: Cysteine--tRNA ligase (461 aa).

Cys-28 lines the Zn(2+) pocket. A 'HIGH' region motif is present at residues 30–40 (ITVYDLCHIGH). 3 residues coordinate Zn(2+): Cys-209, His-234, and Glu-238. Residues 266–270 (KMSKS) carry the 'KMSKS' region motif. ATP is bound at residue Lys-269.

This sequence belongs to the class-I aminoacyl-tRNA synthetase family. As to quaternary structure, monomer. The cofactor is Zn(2+).

It localises to the cytoplasm. It catalyses the reaction tRNA(Cys) + L-cysteine + ATP = L-cysteinyl-tRNA(Cys) + AMP + diphosphate. This Cronobacter sakazakii (strain ATCC BAA-894) (Enterobacter sakazakii) protein is Cysteine--tRNA ligase.